Reading from the N-terminus, the 94-residue chain is MPISSEDAAKVAKLARLRLDDDKLERFAGQMDGILAYMETLGSVDTAGVEPLYSPVTHETPMRADVAAKACSRDQILANAPATDGQFFIVPKIV.

This sequence belongs to the GatC family. In terms of assembly, heterotrimer of A, B and C subunits.

It catalyses the reaction L-glutamyl-tRNA(Gln) + L-glutamine + ATP + H2O = L-glutaminyl-tRNA(Gln) + L-glutamate + ADP + phosphate + H(+). It carries out the reaction L-aspartyl-tRNA(Asn) + L-glutamine + ATP + H2O = L-asparaginyl-tRNA(Asn) + L-glutamate + ADP + phosphate + 2 H(+). Functionally, allows the formation of correctly charged Asn-tRNA(Asn) or Gln-tRNA(Gln) through the transamidation of misacylated Asp-tRNA(Asn) or Glu-tRNA(Gln) in organisms which lack either or both of asparaginyl-tRNA or glutaminyl-tRNA synthetases. The reaction takes place in the presence of glutamine and ATP through an activated phospho-Asp-tRNA(Asn) or phospho-Glu-tRNA(Gln). This Solidesulfovibrio magneticus (strain ATCC 700980 / DSM 13731 / RS-1) (Desulfovibrio magneticus) protein is Aspartyl/glutamyl-tRNA(Asn/Gln) amidotransferase subunit C.